Here is a 522-residue protein sequence, read N- to C-terminus: Signal transduction histidine-protein kinase/phosphatase MprB (522 aa).

At 1-30 (MIRLHRPQRPPLRAPLRATPSLSLRWRVML) the chain is on the cytoplasmic side. The chain crosses the membrane as a helical span at residues 31-51 (LAMSMVAMVVVLMAFAVYAVI). Residues 52–167 (SAALYSDIDN…PTEAVMNKLR (116 aa)) lie on the Extracellular side of the membrane. The chain crosses the membrane as a helical span at residues 168 to 188 (WVLLIVGGVGVAVAAVAGGMV). Residues 189–522 (TRAGLRPVAR…SVDSQSARAR (334 aa)) are Cytoplasmic-facing. Positions 190–242 (RAGLRPVARLTEAAERVARTDDLRPIPVFGSDELARLTESFNLMLRALAESRE) constitute an HAMP domain. Positions 250–470 (DAGHELRTPL…SFYVLLPGRP (221 aa)) constitute a Histidine kinase domain. His-253 is modified (phosphohistidine; by autocatalysis). Positions 468 to 522 (GRPLPPAGHSTPAGESETDKAEAATDPAVPVAGDTANSRESANVISVDSQSARAR) are disordered. Residues 502–522 (TANSRESANVISVDSQSARAR) show a composition bias toward polar residues.

Requires Mg(2+) as cofactor. Mn(2+) serves as cofactor. In terms of processing, autophosphorylated.

It localises to the cell membrane. It catalyses the reaction ATP + protein L-histidine = ADP + protein N-phospho-L-histidine.. Member of the two-component regulatory system MprB/MprA which contributes to maintaining a balance among several systems involved in stress resistance and is required for establishment and maintenance of persistent infection in the host. In response to environmental signals MprB acts both as a membrane-associated protein kinase that undergoes autophosphorylation and subsequently transfers the phosphate to MprA, and a protein phosphatase that dephosphorylates phospho-MprA. The sequence is that of Signal transduction histidine-protein kinase/phosphatase MprB (mprB) from Mycobacterium avium (strain 104).